The chain runs to 300 residues: Acetylglutamate kinase (300 aa).

Substrate is bound by residues 67-68, Arg89, and Asn194; that span reads GG.

Belongs to the acetylglutamate kinase family. ArgB subfamily.

The protein resides in the cytoplasm. It carries out the reaction N-acetyl-L-glutamate + ATP = N-acetyl-L-glutamyl 5-phosphate + ADP. Its pathway is amino-acid biosynthesis; L-arginine biosynthesis; N(2)-acetyl-L-ornithine from L-glutamate: step 2/4. In terms of biological role, catalyzes the ATP-dependent phosphorylation of N-acetyl-L-glutamate. This chain is Acetylglutamate kinase, found in Saccharophagus degradans (strain 2-40 / ATCC 43961 / DSM 17024).